The sequence spans 375 residues: Alcohol dehydrogenase E chain (375 aa).

Ser2 is subject to N-acetylserine. Zn(2+)-binding residues include Cys47, Ser49, His68, Cys98, Cys101, Cys104, Cys112, and Cys175. Residues Ser49 and His68 each coordinate an alcohol. Residue Ser49 participates in NAD(+) binding. NAD(+)-binding positions include 200-205 (GLGGVG), Asp224, Lys229, Val293, 293-295 (VGV), Phe320, and Arg370.

The protein belongs to the zinc-containing alcohol dehydrogenase family. Class-I subfamily. Dimer of identical or non-identical chains of two types (E and S) coded by 2 separate genes at different loci. The cofactor is Zn(2+).

Its subcellular location is the cytoplasm. It catalyses the reaction a primary alcohol + NAD(+) = an aldehyde + NADH + H(+). The catalysed reaction is a secondary alcohol + NAD(+) = a ketone + NADH + H(+). The polypeptide is Alcohol dehydrogenase E chain (Equus caballus (Horse)).